The following is a 416-amino-acid chain: 3-oxoacyl-[acyl-carrier-protein] synthase 2 (416 aa).

In terms of domain architecture, Ketosynthase family 3 (KS3) spans K6–K414. Active-site for beta-ketoacyl synthase activity residues include C167, H307, and H344.

It belongs to the thiolase-like superfamily. Beta-ketoacyl-ACP synthases family. Homodimer.

The catalysed reaction is a fatty acyl-[ACP] + malonyl-[ACP] + H(+) = a 3-oxoacyl-[ACP] + holo-[ACP] + CO2. The enzyme catalyses (9Z)-hexadecenoyl-[ACP] + malonyl-[ACP] + H(+) = 3-oxo-(11Z)-octadecenoyl-[ACP] + holo-[ACP] + CO2. It functions in the pathway lipid metabolism; fatty acid biosynthesis. Functionally, involved in the type II fatty acid elongation cycle. Catalyzes the elongation of a wide range of acyl-ACP by the addition of two carbons from malonyl-ACP to an acyl acceptor. Can efficiently catalyze the conversion of palmitoleoyl-ACP (cis-hexadec-9-enoyl-ACP) to cis-vaccenoyl-ACP (cis-octadec-11-enoyl-ACP), an essential step in the thermal regulation of fatty acid composition. This is 3-oxoacyl-[acyl-carrier-protein] synthase 2 (fabF) from Synechocystis sp. (strain ATCC 27184 / PCC 6803 / Kazusa).